The primary structure comprises 219 residues: Large ribosomal subunit protein uL3 (219 aa).

The interval 133 to 153 (GRASHGNSRSHNVPGSIGMAQ) is disordered. Gln153 bears the N5-methylglutamine mark.

It belongs to the universal ribosomal protein uL3 family. As to quaternary structure, part of the 50S ribosomal subunit. Forms a cluster with proteins L14 and L19. Post-translationally, methylated by PrmB.

One of the primary rRNA binding proteins, it binds directly near the 3'-end of the 23S rRNA, where it nucleates assembly of the 50S subunit. This is Large ribosomal subunit protein uL3 from Burkholderia thailandensis (strain ATCC 700388 / DSM 13276 / CCUG 48851 / CIP 106301 / E264).